We begin with the raw amino-acid sequence, 659 residues long: Crossover junction endonuclease MUS81 (659 aa).

Positions 59–78 (KDLSQIKGFGKWMVKLMKGY) match the Helix-hairpin-helix motif 1 motif. An ERCC4 domain is found at 404–503 (ILILDDREKF…KKLIYILEGD (100 aa)). Positions 585–622 (TISDVFAIQLMQVPQVTEEIAIAVLDMYPTLLSLASAY) match the Helix-hairpin-helix motif 2 motif.

Belongs to the XPF family. Forms a heterodimer with EME1A or EME1B. The cofactor is Mg(2+). It depends on Ca(2+) as a cofactor. As to expression, ubiquitous but preferentially expressed in young flowers buds, notably in anthers.

It is found in the nucleus. The protein resides in the nucleolus. In terms of biological role, interacts with EME1 to form a DNA structure-specific endonuclease with substrate preference for branched DNA structures with a 5'-end at the branch nick. Typical substrates include 3'-flap structures, D-loops, replication forks, nicked Holliday junctions and also intact Holliday junctions with a reduced efficiency. May be required in mitosis for the processing of stalled or collapsed replication fork intermediates. Plays a role in DNA repair and in genotoxic stress-induced homologous recombination (HR) in somatic cells. Mediates a subset of meiotic recombination events that are insensitive to crossover interference. Together with SEND1, essential for the resolution of toxic replication structures to ensure genome stability, and to maintain telomere integrity and replication. The polypeptide is Crossover junction endonuclease MUS81 (Arabidopsis thaliana (Mouse-ear cress)).